Reading from the N-terminus, the 426-residue chain is Probable glucose-6-phosphate isomerase (426 aa).

Glutamate 272 functions as the Proton donor in the catalytic mechanism. Residues histidine 293 and lysine 404 contribute to the active site.

The protein belongs to the GPI family.

The protein resides in the cytoplasm. It catalyses the reaction alpha-D-glucose 6-phosphate = beta-D-fructose 6-phosphate. Its pathway is carbohydrate biosynthesis; gluconeogenesis. The protein operates within carbohydrate degradation; glycolysis; D-glyceraldehyde 3-phosphate and glycerone phosphate from D-glucose: step 2/4. In terms of biological role, catalyzes the reversible isomerization of glucose-6-phosphate to fructose-6-phosphate. The sequence is that of Probable glucose-6-phosphate isomerase from Halobacterium salinarum (strain ATCC 700922 / JCM 11081 / NRC-1) (Halobacterium halobium).